Consider the following 434-residue polypeptide: Histidinol dehydrogenase (434 aa).

NAD(+) contacts are provided by Tyr-130, Gln-188, and Asn-211. Residues Ser-237, Gln-259, and His-262 each contribute to the substrate site. Positions 259 and 262 each coordinate Zn(2+). Residues Glu-326 and His-327 each act as proton acceptor in the active site. 4 residues coordinate substrate: His-327, Asp-360, Glu-414, and His-419. Asp-360 provides a ligand contact to Zn(2+). His-419 is a Zn(2+) binding site.

The protein belongs to the histidinol dehydrogenase family. As to quaternary structure, homodimer. Zn(2+) is required as a cofactor.

The catalysed reaction is L-histidinol + 2 NAD(+) + H2O = L-histidine + 2 NADH + 3 H(+). It functions in the pathway amino-acid biosynthesis; L-histidine biosynthesis; L-histidine from 5-phospho-alpha-D-ribose 1-diphosphate: step 9/9. Its function is as follows. Catalyzes the sequential NAD-dependent oxidations of L-histidinol to L-histidinaldehyde and then to L-histidine. The polypeptide is Histidinol dehydrogenase (Escherichia coli O157:H7).